Reading from the N-terminus, the 446-residue chain is C-type lectin domain family 18 member A (446 aa).

A signal peptide spans 1–26; it reads MLHPETSPGRGHLLAVLLALLGTAWA. An SCP domain is found at 52 to 182; that stretch reads LSLHNRLRSW…AAIEAFVCAY (131 aa). A glycan (N-linked (GlcNAc...) asparagine) is linked at asparagine 144. One can recognise an EGF-like domain in the interval 228-261; it reads PRNPCRMSCQNHGRLNISTCHCHCPPGYTGRYCQ. 4 disulfides stabilise this stretch: cysteine 236-cysteine 249, cysteine 251-cysteine 260, cysteine 327-cysteine 432, and cysteine 408-cysteine 424. Residues 306-433 enclose the C-type lectin domain; the sequence is IDGDCFMVSS…CKTRNRYICQ (128 aa).

In terms of processing, N-glycosylated. In terms of tissue distribution, dectected in all cell lines tested and in peripheral blood cells.

The protein localises to the secreted. The protein resides in the endoplasmic reticulum. It is found in the golgi apparatus. Its subcellular location is the endosome. Functionally, binds polysaccharides in a Ca(2+)-independent manner with a preferentially binding to fucoidan, beta-glucans and galactans. This chain is C-type lectin domain family 18 member A (CLEC18A), found in Homo sapiens (Human).